A 149-amino-acid chain; its full sequence is Arginine repressor (149 aa).

This sequence belongs to the ArgR family.

The protein localises to the cytoplasm. Its pathway is amino-acid biosynthesis; L-arginine biosynthesis [regulation]. Functionally, regulates arginine biosynthesis genes. This Listeria innocua serovar 6a (strain ATCC BAA-680 / CLIP 11262) protein is Arginine repressor.